A 410-amino-acid polypeptide reads, in one-letter code: MVKTVALLTAGGLAPCLSSAVGGLIERYTEMSPETNIILYLNGYKGLLLGEKVLVTPAMRLQAHVLHTVGGSCIGNSRVKMANVADCVKRGLVKEGQDPRQVAADQLIKDGVDVLHTIGGDDTNTAAADLAAYLKAHGYTLRVIGLPKTIDNDIVPVRQSLGAMTAAEQASRFFQNVVAEQTANPRVLLVHEVMGRSCGYLTAQAADYYRAQLAHREFAPELGHTRERYDIHAVYVPEMTIDLKAEAARLRAVMERVGCVNIFLSEGAGINDIVAEMTAKGETVPRDPFGHVKIDLINPGAWFGKQFGGMVGADKVLVQKSGYFSRSAPANAEDLRLIKGMVDLAVDCALRGEAGLIGHDEERNGVLRAIEFERVKGAKAFNIDHPWFTHLLNEIGQPKGAKVSVAHGDE.

Gly12 provides a ligand contact to diphosphate. Asp121 provides a ligand contact to Mg(2+). Substrate-binding positions include 149 to 151, 194 to 196, Glu266, and 323 to 326; these read TID, MGR, and YFSR. The active-site Proton acceptor is the Asp151.

The protein belongs to the phosphofructokinase type A (PFKA) family. PPi-dependent PFK group II subfamily. Clade 'P' sub-subfamily. Homodimer or homotetramer. Mg(2+) serves as cofactor.

It is found in the cytoplasm. The enzyme catalyses beta-D-fructose 6-phosphate + diphosphate = beta-D-fructose 1,6-bisphosphate + phosphate + H(+). Its pathway is carbohydrate degradation; glycolysis; D-glyceraldehyde 3-phosphate and glycerone phosphate from D-glucose: step 3/4. With respect to regulation, non-allosteric. Its function is as follows. Catalyzes the phosphorylation of D-fructose 6-phosphate, the first committing step of glycolysis. Uses inorganic phosphate (PPi) as phosphoryl donor instead of ATP like common ATP-dependent phosphofructokinases (ATP-PFKs), which renders the reaction reversible, and can thus function both in glycolysis and gluconeogenesis. Consistently, PPi-PFK can replace the enzymes of both the forward (ATP-PFK) and reverse (fructose-bisphosphatase (FBPase)) reactions. In Mastigamoeba balamuthi (Phreatamoeba balamuthi), this protein is Pyrophosphate--fructose 6-phosphate 1-phosphotransferase.